A 168-amino-acid polypeptide reads, in one-letter code: Variant surface antigen D (168 aa).

Residues 1–29 (MKKSIFSKKLLVSFGSLVTLAAIPLIAIS) form the signal peptide. The N-palmitoyl cysteine moiety is linked to residue Cys-30. Residue Cys-30 is the site of S-diacylglycerol cysteine attachment. The interval 33–168 (TNTDQSQQPG…STSTSNMNTR (136 aa)) is disordered. Composition is skewed to low complexity over residues 35–44 (TDQSQQPGSG) and 52–71 (GTTT…ESGT). A compositionally biased stretch (gly residues) spans 72–81 (TTGGQTGTTT). 7 repeat units span residues 81 to 92 (TGGQSDSTSTSK), 93 to 104 (EQGSSDSTSTSK), 105 to 116 (EQGSSDSTSTSK), 117 to 128 (EQGSSDSTSTSK), 129 to 140 (EQGSSDSTSTSK), 141 to 152 (EQGSSDSTSTSK), and 153 to 164 (EQGSSDSTSTSN). The interval 81 to 164 (TGGQSDSTST…GSSDSTSTSN (84 aa)) is 7 X 12 AA tandem repeats. Residues 82 to 168 (GGQSDSTSTS…STSTSNMNTR (87 aa)) are compositionally biased toward low complexity.

It is found in the cell membrane. Functionally, responsible for the antigenic diversity for host adaptation. Expression in E.coli of a construct containing vlpD, vlpE, and vlpF yields antigenically distinguishable products corresponding to each gene. The polypeptide is Variant surface antigen D (vlpD) (Mesomycoplasma hyorhinis (Mycoplasma hyorhinis)).